The following is a 452-amino-acid chain: Proline--tRNA ligase (452 aa).

The protein belongs to the class-II aminoacyl-tRNA synthetase family. ProS type 2 subfamily. Homodimer.

It localises to the cytoplasm. It catalyses the reaction tRNA(Pro) + L-proline + ATP = L-prolyl-tRNA(Pro) + AMP + diphosphate. Catalyzes the attachment of proline to tRNA(Pro) in a two-step reaction: proline is first activated by ATP to form Pro-AMP and then transferred to the acceptor end of tRNA(Pro). This chain is Proline--tRNA ligase, found in Jannaschia sp. (strain CCS1).